The chain runs to 189 residues: Selenoprotein S (189 aa).

The helical transmembrane segment at 28–48 threads the bilayer; sequence SLLATYGWYIVFSCILLYVVF. The segment at 78–90 is VCP/p97-interacting motif (VIM); it reads RQEALAAARLKMQ. The segment at 115 to 189 is disordered; sequence KIEMWDSMQE…RRGPSSGGUG (75 aa). Phosphoserine is present on Ser-140. The segment covering 159–173 has biased composition (gly residues); sequence RGGGYNPLSGEGGGA. Sec-188 is a non-standard amino acid (selenocysteine).

It belongs to the selenoprotein S family. In terms of assembly, interacts with DERL1 and (via VIM motif) with VCP, suggesting that it forms a membrane complex with DERL1 that serves as a receptor for VCP. Also interacts with DERL2, DERL3 and SELENOK. The SELENOK-SELENOS complex interacts with VCP. Interacts with CCDC47. Post-translationally, truncated SELENOS proteins produced by failed UGA/Sec decoding are ubiquitinated by the CRL2(KLHDC2) and CRL2(KLHDC3) complexes, which recognizes the glycine (Gly) at the C-terminus of truncated SELENOS proteins. Truncated SELENOS proteins produced by failed UGA/Sec decoding are also ubiquitinated by the CRL5(KLHDC1) complex.

The protein localises to the endoplasmic reticulum membrane. The protein resides in the cytoplasm. Its function is as follows. Involved in the degradation process of misfolded endoplasmic reticulum (ER) luminal proteins. Participates in the transfer of misfolded proteins from the ER to the cytosol, where they are destroyed by the proteasome in a ubiquitin-dependent manner. Probably acts by serving as a linker between DERL1, which mediates the retrotranslocation of misfolded proteins into the cytosol, and the ATPase complex VCP, which mediates the translocation and ubiquitination. The chain is Selenoprotein S from Homo sapiens (Human).